The chain runs to 119 residues: Large ribosomal subunit protein bL20 (119 aa).

The protein belongs to the bacterial ribosomal protein bL20 family.

Functionally, binds directly to 23S ribosomal RNA and is necessary for the in vitro assembly process of the 50S ribosomal subunit. It is not involved in the protein synthesizing functions of that subunit. The protein is Large ribosomal subunit protein bL20 of Sorangium cellulosum (strain So ce56) (Polyangium cellulosum (strain So ce56)).